A 262-amino-acid polypeptide reads, in one-letter code: Glutamine-binding protein (262 aa).

An N-terminal signal peptide occupies residues 1-26 (MKRKTVWKIWITLALIALLSITALAG). Cys27 is lipidated: N-palmitoyl cysteine. Cys27 carries S-diacylglycerol cysteine lipidation.

It belongs to the bacterial solute-binding protein 3 family.

Its subcellular location is the cell membrane. In terms of biological role, involved in glutamine-transport system. Interacts with the glutamine-transport system GlnPQ. This chain is Glutamine-binding protein (glnH), found in Geobacillus stearothermophilus (Bacillus stearothermophilus).